A 474-amino-acid polypeptide reads, in one-letter code: UDP-N-acetylmuramate--L-alanine ligase (474 aa).

108 to 114 lines the ATP pocket; it reads GTHGKTT.

It belongs to the MurCDEF family.

The protein resides in the cytoplasm. It carries out the reaction UDP-N-acetyl-alpha-D-muramate + L-alanine + ATP = UDP-N-acetyl-alpha-D-muramoyl-L-alanine + ADP + phosphate + H(+). It functions in the pathway cell wall biogenesis; peptidoglycan biosynthesis. Cell wall formation. This Chloroflexus aggregans (strain MD-66 / DSM 9485) protein is UDP-N-acetylmuramate--L-alanine ligase.